The primary structure comprises 666 residues: Frizzled-3 (666 aa).

The signal sequence occupies residues 1–22; sequence MAVSWIVFDLWLLTVFLGQIGG. The region spanning 23-136 is the FZ domain; sequence HSLFSCEPIT…CSRFPDCDEP (114 aa). Residues 23-205 are Extracellular-facing; sequence HSLFSCEPIT…REELSFARYF (183 aa). Disulfide bonds link C28–C89, C36–C82, C73–C110, C99–C133, and C103–C127. N-linked (GlcNAc...) asparagine glycosylation occurs at N42. The chain crosses the membrane as a helical span at residues 206–226; sequence IGLISIICLSATLFTFLTFLI. Over 227–237 the chain is Cytoplasmic; that stretch reads DVTRFRYPERP. Residues 238-258 form a helical membrane-spanning segment; the sequence is IIFYAVCYMMVSLIFFIGFLL. Topologically, residues 259-288 are extracellular; the sequence is EDRVACNASSPAQYKASTVTQGSHNKACTM. N265 is a glycosylation site (N-linked (GlcNAc...) asparagine). A helical transmembrane segment spans residues 289–309; the sequence is LFMVLYFFTMAGSVWWVILTI. The Cytoplasmic portion of the chain corresponds to 310–328; it reads TWFLAAVPKWGSEAIEKKA. A helical membrane pass occupies residues 329 to 349; the sequence is LLFHASAWGIPGTLTIILLAM. Residues 350–374 lie on the Extracellular side of the membrane; the sequence is NKIEGDNISGVCFVGLYDVDALRYF. Residue N356 is glycosylated (N-linked (GlcNAc...) asparagine). The chain crosses the membrane as a helical span at residues 375-395; the sequence is VLAPLCLYVVVGVSLLLAGII. The Cytoplasmic segment spans residues 396–420; it reads SLNRVRIEIPLEKENQDKLVKFMIR. A helical transmembrane segment spans residues 421-441; it reads IGVFSILYLVPLLVVIGCYFY. The Extracellular segment spans residues 442–477; sequence EQAYRGIWETTWIQERCREYHIPCPYQVTQMSRPDL. A helical transmembrane segment spans residues 478–498; it reads ILFLMKYLMALIVGIPSIFWV. Over 499 to 666 the chain is Cytoplasmic; the sequence is GSKKTCFEWA…RVIEEDGTSA (168 aa). A Lys-Thr-X-X-X-Trp motif, mediates interaction with the PDZ domain of Dvl family members motif is present at residues 502–507; it reads KTCFEW. The tract at residues 538-666 is disordered; the sequence is RDPNTPIIRK…RVIEEDGTSA (129 aa). Over residues 550-565 the composition is skewed to polar residues; sequence GTSTQGTSTHASSTQL. Basic and acidic residues predominate over residues 617–638; sequence LTDHSRHSSSHRLNEQSRHSSI. The span at 639 to 656 shows a compositional bias: polar residues; it reads RDLSNNPMTHITHGTSMN.

This sequence belongs to the G-protein coupled receptor Fz/Smo family. As to quaternary structure, interacts with VANGL2. Ubiquitinated by ZNRF3, leading to its degradation by the proteasome. As to expression, expressed in the cortex, diencephalon, rostral brainstem and little or no staining is seen in the striatum or cerebellum. Expressed in both hair cells and supporting cells in the utricle, saccule, cristae and the organ of Corti in the inner ear (at protein level). Highly expressed in the CNS. In skin, it is restricted to the epidermis and to the developing hair follicle.

The protein localises to the membrane. It localises to the cell membrane. The protein resides in the cell surface. Its subcellular location is the apical cell membrane. In terms of biological role, receptor for Wnt proteins. Most of frizzled receptors are coupled to the beta-catenin canonical signaling pathway, which leads to the activation of disheveled proteins, inhibition of GSK-3 kinase, nuclear accumulation of beta-catenin and activation of Wnt target genes. A second signaling pathway involving PKC and calcium fluxes has been seen for some family members, but it is not yet clear if it represents a distinct pathway or if it can be integrated in the canonical pathway, as PKC seems to be required for Wnt-mediated inactivation of GSK-3 kinase. Both pathways seem to involve interactions with G-proteins. Activation by Wnt5A stimulates PKC activity via a G-protein-dependent mechanism. Involved in transduction and intercellular transmission of polarity information during tissue morphogenesis and/or in differentiated tissues. Plays a role in controlling early axon growth and guidance processes necessary for the formation of a subset of central and peripheral major fiber tracts. Required for the development of major fiber tracts in the central nervous system, including: the anterior commissure, the corpus callosum, the thalamocortical, corticothalamic and nigrostriatal tracts, the corticospinal tract, the fasciculus retroflexus, the mammillothalamic tract, the medial lemniscus, and ascending fiber tracts from the spinal cord to the brain. In the peripheral nervous system, controls axon growth in distinct populations of cranial and spinal motor neurons, including the facial branchimotor nerve, the hypoglossal nerve, the phrenic nerve, and motor nerves innervating dorsal limbs. Involved in the migration of cranial neural crest cells. May also be implicated in the transmission of sensory information from the trunk and limbs to the brain. Controls commissural sensory axons guidance after midline crossing along the anterior-posterior axis in the developing spinal cord in a Wnt-dependent signaling pathway. Together with FZD6, is involved in the neural tube closure and plays a role in the regulation of the establishment of planar cell polarity (PCP), particularly in the orientation of asymmetric bundles of stereocilia on the apical faces of a subset of auditory and vestibular sensory cells located in the inner ear. Promotes neurogenesis by maintaining sympathetic neuroblasts within the cell cycle in a beta-catenin-dependent manner. The polypeptide is Frizzled-3 (Fzd3) (Mus musculus (Mouse)).